Consider the following 425-residue polypeptide: Dihydroorotase (425 aa).

Positions 59 and 61 each coordinate Zn(2+). Residues 61–63 (HLR) and N93 contribute to the substrate site. The Zn(2+) site is built by D151, H178, and H231. N277 contributes to the substrate binding site. D304 provides a ligand contact to Zn(2+). D304 is a catalytic residue. Substrate-binding positions include H308 and 322–323 (FG).

The protein belongs to the metallo-dependent hydrolases superfamily. DHOase family. Class I DHOase subfamily. Requires Zn(2+) as cofactor.

The enzyme catalyses (S)-dihydroorotate + H2O = N-carbamoyl-L-aspartate + H(+). It participates in pyrimidine metabolism; UMP biosynthesis via de novo pathway; (S)-dihydroorotate from bicarbonate: step 3/3. In terms of biological role, catalyzes the reversible cyclization of carbamoyl aspartate to dihydroorotate. The protein is Dihydroorotase of Staphylococcus epidermidis (strain ATCC 12228 / FDA PCI 1200).